Consider the following 325-residue polypeptide: ATP synthase gamma chain (325 aa).

This sequence belongs to the ATPase gamma chain family. As to quaternary structure, F-type ATPases have 2 components, CF(1) - the catalytic core - and CF(0) - the membrane proton channel. CF(1) has five subunits: alpha(3), beta(3), gamma(1), delta(1), epsilon(1). CF(0) has three main subunits: a, b and c.

It localises to the cell membrane. Functionally, produces ATP from ADP in the presence of a proton gradient across the membrane. The gamma chain is believed to be important in regulating ATPase activity and the flow of protons through the CF(0) complex. This Corynebacterium glutamicum (strain R) protein is ATP synthase gamma chain.